The sequence spans 214 residues: 3-demethoxyubiquinol 3-hydroxylase (214 aa).

Fe cation-binding residues include E63, E93, H96, E145, E177, and H180.

It belongs to the COQ7 family. It depends on Fe cation as a cofactor.

It localises to the cell membrane. The enzyme catalyses a 5-methoxy-2-methyl-3-(all-trans-polyprenyl)benzene-1,4-diol + AH2 + O2 = a 3-demethylubiquinol + A + H2O. The protein operates within cofactor biosynthesis; ubiquinone biosynthesis. In terms of biological role, catalyzes the hydroxylation of 2-nonaprenyl-3-methyl-6-methoxy-1,4-benzoquinol during ubiquinone biosynthesis. This Psychrobacter cryohalolentis (strain ATCC BAA-1226 / DSM 17306 / VKM B-2378 / K5) protein is 3-demethoxyubiquinol 3-hydroxylase.